The chain runs to 415 residues: Probable G-protein coupled receptor 19 (415 aa).

The Extracellular portion of the chain corresponds to 1–69; the sequence is MVFAHRMDND…LNPGEVATAS (69 aa). Residues Asn25 and Asn52 are each glycosylated (N-linked (GlcNAc...) asparagine). The helical transmembrane segment at 70–90 threads the bilayer; sequence IFFGALWLFSIFGNSLVCLVI. At 91 to 102 the chain is on the cytoplasmic side; the sequence is HRSRRTQSTTNY. Residues 103–123 traverse the membrane as a helical segment; sequence FVVSMACADLLISVASTPFVV. The Extracellular segment spans residues 124-152; it reads LQFTTGRWTLGSAMCKVVRYFQYLTPGVQ. A disulfide bond links Cys138 and Cys210. The chain crosses the membrane as a helical span at residues 153–173; the sequence is IYVLLSICIDRFYTIVYPLSF. Residues 174 to 182 are Cytoplasmic-facing; sequence KVSREKAKK. Residues 183–203 traverse the membrane as a helical segment; that stretch reads MIAASWILDAAFVTPVFFFYG. Residues 204 to 221 lie on the Extracellular side of the membrane; it reads SNWDSHCNYFLPPSWEGT. The chain crosses the membrane as a helical span at residues 222–242; it reads AYTVIHFLVGFVIPSILIILF. The Cytoplasmic portion of the chain corresponds to 243–277; that stretch reads YQKVIKYIWRIGTDGRTLRRTMNIVPRTKVKTVKM. Residues 278 to 298 traverse the membrane as a helical segment; the sequence is FLLLNLVFLFSWLPFHVAQLW. The Extracellular segment spans residues 299–309; sequence HPHEQDYKKSS. Residues 310–332 form a helical membrane-spanning segment; it reads LVFTAVTWVSFSSSASKPTLYSI. The Cytoplasmic portion of the chain corresponds to 333 to 415; sequence YNANFRRGMK…INSNPPNTFV (83 aa).

Belongs to the G-protein coupled receptor 1 family. In terms of tissue distribution, strongly expressed in the brain.

Its subcellular location is the cell membrane. G-protein coupled receptor that plays a role in the regulation of circadian rhythms and energy metabolism. Participates in maintaining proper circadian gene expression in the suprachiasmatic nucleus (SCN), the locus of the master circadian clock in the brain. May function as a coordinator of aging-associated metabolic dysfunction, stress response, DNA integrity management, and eventual senescence. Upon binding to adropin, modulates mitochondrial energy metabolism via the p44/42-PDK4 signaling pathway, influencing pyruvate dehydrogenase activity. This Mus musculus (Mouse) protein is Probable G-protein coupled receptor 19 (Gpr19).